Consider the following 736-residue polypeptide: Orphan sodium- and chloride-dependent neurotransmitter transporter NTT5 (736 aa).

Over 1–138 (MKTEAQPSTS…FAYLWLNSGG (138 aa)) the chain is Cytoplasmic. 3 helical membrane-spanning segments follow: residues 139–159 (CSFA…LLFL), 177–197 (IIAP…FILG), and 199–219 (YFNV…QFPV). Residues 220 to 263 (PWEKCPLTMNSSGFDPECERTTPSIYFWYQQALKASDRIEDGGS) are Extracellular-facing. N-linked (GlcNAc...) asparagine glycosylation is present at asparagine 229. Helical transmembrane passes span 264–284 (PVYS…AFMI), 290–310 (TGKV…GFFI), 338–358 (VWSL…GSVA), and 383–403 (LTLL…ATVI). At 404-495 (THRCCERNAE…EAMSFLPPSV (92 aa)) the chain is on the extracellular side. The next 5 helical transmembrane spans lie at 496–516 (FWSF…AIGI), 534–554 (HTKL…LFFT), 568–588 (YWIV…VSWA), 609–629 (IFGW…FVTM), and 659–679 (ALLL…AYFV). The Cytoplasmic portion of the chain corresponds to 680–736 (YCRIHRIPFRPKSGDGPMTASTSLPLSHQLTPSKEVQKEEILQVDETKYPSTCNVTS).

It belongs to the sodium:neurotransmitter symporter (SNF) (TC 2.A.22) family. SLC6A16 subfamily. In terms of tissue distribution, highly expressed in peripheral tissues, particularly in testis, pancreas, and prostate.

It localises to the membrane. The protein is Orphan sodium- and chloride-dependent neurotransmitter transporter NTT5 (SLC6A16) of Homo sapiens (Human).